A 110-amino-acid chain; its full sequence is Non-specific lipid-transfer protein 4 (110 aa).

An N-terminal signal peptide occupies residues 1 to 17 (CVVLVMCMVVIAPMAEG). 4 disulfide bridges follow: C21-C68, C31-C45, C46-C91, and C66-C105.

This sequence belongs to the plant LTP family.

In terms of biological role, plant non-specific lipid-transfer proteins transfer phospholipids as well as galactolipids across membranes. May play a role in wax or cutin deposition in the cell walls of expanding epidermal cells and certain secretory tissues. This is Non-specific lipid-transfer protein 4 from Lens culinaris (Lentil).